Reading from the N-terminus, the 1368-residue chain is MHYSFTEKKRIRKSFAKRANVHNVPFLLATQLESYHDFLQEDKIPSQRKNEGLQSAFTSIFPIVSHNGFARLEFLSYVLGDPPFNIKECQQRGLTYASPLRAKVRLVILDKESPTKPVVKEMKEQEVYMGELPLMTSTGSFVINGTERVIVSQLHRSPGVFFEHDRGKTHSSGKLLFSARIIPYRGSWLDYEFDPKDILFFRVDRRRKMPVTILLKAIGMTPEQILENFFVFDDFTLHADGAEMKFVAERLRGEVARFDITDKAGKVLVAKDKRINSKHVRDVEAAGIKQISVPEDYLLGRILAKNIVDADTGEVIASANDELTDDLLARLREGKISHIQTLYTNDLDQGGYISQTLRMDDTNDQMAAKVAIYRMMRPGEPPTEDSVEALFNGLFYNPDRYDLSAVGRMKFNRRIGRDSLTGDMTLSNEDVLAVIKILVELRNGRGEVDDIDHLGNRRVRCVGELAENQFRAGLVRVERAVKERLGQAEADNLMPHDLINSKPISAAIREFFGSSQLSQFMDQTNPLSEITHKRRVSALGPGGLTRERAGFEVRDVHPTHYGRVCPIETPEGPNIGLINSLALYARLNEYGFLETPYRKVEGSKVTDQIDYLSAIEEGRYIIAQANATIDKAGMLSDELVSAREAGETILVSPERVQYMDVAPGQVVSVAASLIPFLEHDDANRALMGANMQRQAVPCLRPEKALVGTGIERTVAVDSGTTVQALRGGIVDYIDAGRVVIRVNDDEAQAGEVGVDIYNLIKYTRSNQNTNINQRPIVQVGDRVAKHDVIADGASTDLGELALGQNMLVAFMPWNGYNFEDSILISEKVVADDRYTSIHIEELSVVARDTKLGAEEITRDISNLAENQLARLDESGIVYIGAEVTAGDTLVGKVTPKGETQLTPEEKLLRAIFGEKASDVKDTSLRVPSGMVGTVIDVQVFTREGIPRDKRAQQIIDDELQRYRLDLNDQLRIVEGDAFQRLEKMLVGKVVNGGPKKIAKGTKITAEYLADLDKYHWFDIRPSDDTSANALEAIKESIAEKRHQFDLAFEEKRKKLTQGDELPPGVQKMVKVYLAVKRRLQPGDKMAGRHGNKGVVSRILPIEDMPHMADGTPADVVLNPLGVPSRMNVGQVLEVHLGWAAKGLGLRIGEMLNTQVQIAELRKFLAAIYNESGKTEDLDSFSDAEILELASNLKNGVPFATPVFDGADEGETRRMLDLAYPDHIAKQLGMTASKNQVTMYDGRTGEAFERTVTVGYMHYLKLHHLVDDKMHARSTGPYSLVTQQPLGGKAQFGGQRFGEMEVWALEAYGASYVLQEMLTVKSDDVNGRTKVYENLVKGDHVIDAGMPESFNVLVKEIRSLGIDIDLERD.

It belongs to the RNA polymerase beta chain family. The RNAP catalytic core consists of 2 alpha, 1 beta, 1 beta' and 1 omega subunit. When a sigma factor is associated with the core the holoenzyme is formed, which can initiate transcription.

The catalysed reaction is RNA(n) + a ribonucleoside 5'-triphosphate = RNA(n+1) + diphosphate. DNA-dependent RNA polymerase catalyzes the transcription of DNA into RNA using the four ribonucleoside triphosphates as substrates. The protein is DNA-directed RNA polymerase subunit beta of Herminiimonas arsenicoxydans.